Reading from the N-terminus, the 1237-residue chain is Zinc finger protein 687 (1237 aa).

2 disordered regions span residues Met1–Ser80 and Glu96–Val330. Positions Ala97–Gly111 are enriched in low complexity. Phosphoserine occurs at positions 102, 129, and 140. The segment covering Pro132–Pro144 has biased composition (pro residues). A Phosphothreonine modification is found at Thr148. A phosphoserine mark is found at Ser227, Ser242, Ser251, Ser253, Ser266, and Ser271. The span at Leu234–Lys244 shows a compositional bias: polar residues. Residue Lys285 forms a Glycyl lysine isopeptide (Lys-Gly) (interchain with G-Cter in SUMO2) linkage. The segment covering Ser297–Glu310 has biased composition (low complexity). Residues Lys336 and Lys372 each participate in a glycyl lysine isopeptide (Lys-Gly) (interchain with G-Cter in SUMO2) cross-link. Ser374 is subject to Phosphoserine. Thr377 is modified (phosphothreonine). Glycyl lysine isopeptide (Lys-Gly) (interchain with G-Cter in SUMO2) cross-links involve residues Lys384, Lys397, and Lys422. At Ser433 the chain carries Phosphoserine. Residues Lys435, Lys439, Lys451, and Lys464 each participate in a glycyl lysine isopeptide (Lys-Gly) (interchain with G-Cter in SUMO2) cross-link. Residue Ser495 is modified to Phosphoserine. The C2H2-type 1; degenerate zinc finger occupies Tyr533 to Tyr552. C2H2-type zinc fingers lie at residues Asn705–His727, Tyr764–His787, His792–His815, Tyr827–His849, and Phe858–His881. Positions Thr880 to Ala890 are enriched in basic and acidic residues. The segment at Thr880 to Gly957 is disordered. Thr900 carries the post-translational modification Phosphothreonine. Residues Ala915 to Ser925 show a composition bias toward low complexity. Residue Lys954 forms a Glycyl lysine isopeptide (Lys-Gly) (interchain with G-Cter in SUMO2) linkage. C2H2-type zinc fingers lie at residues Trp963 to His986 and Phe993 to His1016. Lys1043 participates in a covalent cross-link: Glycyl lysine isopeptide (Lys-Gly) (interchain with G-Cter in SUMO2). Positions Leu1051–Glu1121 are disordered. Phosphoserine is present on Ser1057. Position 1060 is an omega-N-methylarginine (Arg1060). A phosphoserine mark is found at Ser1082, Ser1083, and Ser1085. Arg1101 is modified (omega-N-methylarginine). Residues Ser1106 and Ser1118 each carry the phosphoserine modification. Residues Gln1135 to His1158 form a C2H2-type 9 zinc finger. The interval Lys1159–Ala1195 is disordered. Ser1184, Ser1191, and Ser1211 each carry phosphoserine. The segment at Leu1200–His1222 adopts a C2H2-type 10 zinc-finger fold.

Belongs to the krueppel C2H2-type zinc-finger protein family. As to quaternary structure, interacts with ZMYND8. As to expression, widely expressed with highest levels in obvary, muscle, blood and lung.

It is found in the cytoplasm. The protein localises to the nucleus. In terms of biological role, may be involved in transcriptional regulation. The chain is Zinc finger protein 687 (ZNF687) from Homo sapiens (Human).